A 561-amino-acid polypeptide reads, in one-letter code: Dihydroxy-acid dehydratase 2 (561 aa).

Cys53 is a binding site for [2Fe-2S] cluster. Asp85 lines the Mg(2+) pocket. Cys126 contacts [2Fe-2S] cluster. 2 residues coordinate Mg(2+): Asp127 and Lys128. An N6-carboxylysine modification is found at Lys128. A [2Fe-2S] cluster-binding site is contributed by Cys195. A Mg(2+)-binding site is contributed by Glu446. The Proton acceptor role is filled by Ser472.

It belongs to the IlvD/Edd family. As to quaternary structure, homodimer. [2Fe-2S] cluster serves as cofactor. Mg(2+) is required as a cofactor.

It carries out the reaction (2R)-2,3-dihydroxy-3-methylbutanoate = 3-methyl-2-oxobutanoate + H2O. The catalysed reaction is (2R,3R)-2,3-dihydroxy-3-methylpentanoate = (S)-3-methyl-2-oxopentanoate + H2O. It participates in amino-acid biosynthesis; L-isoleucine biosynthesis; L-isoleucine from 2-oxobutanoate: step 3/4. It functions in the pathway amino-acid biosynthesis; L-valine biosynthesis; L-valine from pyruvate: step 3/4. In terms of biological role, functions in the biosynthesis of branched-chain amino acids. Catalyzes the dehydration of (2R,3R)-2,3-dihydroxy-3-methylpentanoate (2,3-dihydroxy-3-methylvalerate) into 2-oxo-3-methylpentanoate (2-oxo-3-methylvalerate) and of (2R)-2,3-dihydroxy-3-methylbutanoate (2,3-dihydroxyisovalerate) into 2-oxo-3-methylbutanoate (2-oxoisovalerate), the penultimate precursor to L-isoleucine and L-valine, respectively. This is Dihydroxy-acid dehydratase 2 from Acinetobacter baylyi (strain ATCC 33305 / BD413 / ADP1).